The primary structure comprises 428 residues: Adenylosuccinate synthetase (428 aa).

GTP contacts are provided by residues 12–18 (GDEGKGK) and 40–42 (GHT). The Proton acceptor role is filled by Asp-13. Mg(2+) contacts are provided by Asp-13 and Gly-40. IMP is bound by residues 13-16 (DEGK), 38-41 (NAGH), Thr-130, Arg-144, Gln-225, Thr-240, and Arg-304. The active-site Proton donor is His-41. 300 to 306 (VTTGRSR) provides a ligand contact to substrate. Residues Arg-306, 332–334 (KID), and 414–416 (GVG) contribute to the GTP site.

It belongs to the adenylosuccinate synthetase family. As to quaternary structure, homodimer. Mg(2+) serves as cofactor.

The protein resides in the cytoplasm. It carries out the reaction IMP + L-aspartate + GTP = N(6)-(1,2-dicarboxyethyl)-AMP + GDP + phosphate + 2 H(+). It functions in the pathway purine metabolism; AMP biosynthesis via de novo pathway; AMP from IMP: step 1/2. Functionally, plays an important role in the de novo pathway of purine nucleotide biosynthesis. Catalyzes the first committed step in the biosynthesis of AMP from IMP. The sequence is that of Adenylosuccinate synthetase from Clostridium botulinum (strain Alaska E43 / Type E3).